A 240-amino-acid chain; its full sequence is Homeobox protein goosecoid (240 aa).

A DNA-binding region (homeobox) is located at residues Lys-146–Lys-205. Residues Ala-199–Ser-240 are disordered. Residues Thr-225–Ser-240 are compositionally biased toward basic and acidic residues.

It belongs to the paired homeobox family. Bicoid subfamily.

The protein localises to the nucleus. The polypeptide is Homeobox protein goosecoid (gsc) (Danio rerio (Zebrafish)).